The sequence spans 922 residues: Probable dipeptidyl-aminopeptidase B (922 aa).

Residues 1-16 (MATEKGHSRDDEERVP) are compositionally biased toward basic and acidic residues. Residues 1 to 21 (MATEKGHSRDDEERVPLTRGS) form a disordered region. Over 1 to 99 (MATEKGHSRD…KPMHKSVKIA (99 aa)) the chain is Cytoplasmic. Residues 100–120 (LWSLLFLSLGGWSLAFVLFIF) form a helical; Signal-anchor for type II membrane protein membrane-spanning segment. Residues 121 to 922 (RSHDTYQTPI…AGLYKFKHLC (802 aa)) lie on the Vacuolar side of the membrane. N-linked (GlcNAc...) asparagine glycosylation is found at N135, N200, N351, and N574. The active-site Charge relay system is the S756. N-linked (GlcNAc...) asparagine glycosylation occurs at N815. Active-site charge relay system residues include D833 and H866. A glycan (N-linked (GlcNAc...) asparagine) is linked at N902.

This sequence belongs to the peptidase S9B family.

It localises to the vacuole membrane. The catalysed reaction is Release of an N-terminal dipeptide, Xaa-Yaa-|-Zaa-, from a polypeptide, preferentially when Yaa is Pro, provided Zaa is neither Pro nor hydroxyproline.. Type IV dipeptidyl-peptidase which removes N-terminal dipeptides sequentially from polypeptides having unsubstituted N-termini provided that the penultimate residue is proline. The sequence is that of Probable dipeptidyl-aminopeptidase B (DAPB) from Ajellomyces capsulatus (strain NAm1 / WU24) (Darling's disease fungus).